Reading from the N-terminus, the 35-residue chain is Conotoxin Ca15a (35 aa).

Position 8 is a 4-hydroxyproline (Pro-8).

In terms of processing, contains 4 disulfide bonds. Expressed by the venom duct.

The protein localises to the secreted. The chain is Conotoxin Ca15a from Conus caracteristicus (Characteristic cone).